The sequence spans 218 residues: tRNA (guanine-N(7)-)-methyltransferase (218 aa).

S-adenosyl-L-methionine-binding residues include glutamate 45, glutamate 70, aspartate 97, and aspartate 119. Residue aspartate 119 is part of the active site. A substrate-binding site is contributed by lysine 123. Residues 125 to 130 are interaction with RNA; the sequence is RHEKRR. Substrate is bound by residues aspartate 155 and 195–198; that span reads TEYE.

It belongs to the class I-like SAM-binding methyltransferase superfamily. TrmB family.

The catalysed reaction is guanosine(46) in tRNA + S-adenosyl-L-methionine = N(7)-methylguanosine(46) in tRNA + S-adenosyl-L-homocysteine. The protein operates within tRNA modification; N(7)-methylguanine-tRNA biosynthesis. Catalyzes the formation of N(7)-methylguanine at position 46 (m7G46) in tRNA. In Lactobacillus acidophilus (strain ATCC 700396 / NCK56 / N2 / NCFM), this protein is tRNA (guanine-N(7)-)-methyltransferase.